A 663-amino-acid chain; its full sequence is Innate immunity activator protein (663 aa).

Residues M1–W68 form a disordered region. Positions R40–A50 are enriched in low complexity. The stretch at A118 to L147 forms a coiled coil. The Nuclear localization signal (NLS) 1 signature appears at P164–I170. Disordered stretches follow at residues R242–L362, V378–R425, and P444–G493. Residues E259–L272 show a composition bias toward low complexity. A compositionally biased stretch (pro residues) spans P282–P298. The segment covering T327 to S340 has biased composition (basic and acidic residues). The Nuclear localization signal (NLS) 2 signature appears at P332–K338. Polar residues predominate over residues A350–S361. The Nuclear localization signal (NLS) 3 motif lies at P422 to H428. Residues E455–P475 show a composition bias toward low complexity.

As to quaternary structure, interacts with IRAK1, NOD2 and RIPK2; the interaction takes place upon PRR stimulation. Interacts with YWHAQ/14-3-3T; the interaction increases upon PRR stimulation and is required for cellular signaling pathway activation and cytokine secretion. Interacts (via N-terminal domain) with CYTH1 and CYTH2 (via their N-terminal domains). Interacts with FBXW11 and BTRC; associates with SCF E3 ubiquitin-protein ligase complexes. Highly expressed in intestinal myeloid-derived cells and expressed in monocyte-derived macrophages upon induction by PRR activation.

The protein resides in the nucleus. It localises to the cytoplasm. Functionally, expressed in peripheral macrophages and intestinal myeloid-derived cells, is required for optimal PRR (pattern recognition receptor)-induced signaling, cytokine secretion, and bacterial clearance. Upon stimulation of a broad range of PRRs (pattern recognition receptor) such as NOD2 or TLR2, TLR3, TLR4, TLR5, TLR7 and TLR9, associates with YWHAQ/14-3-3T, which in turn leads to the recruitment and activation of MAP kinases and NF-kappa-B signaling complexes that amplifies PRR-induced downstream signals and cytokine secretion. In the intestine, regulates adherens junction stability by regulating the degradation of CYTH1 and CYTH2, probably acting as substrate cofactor for SCF E3 ubiquitin-protein ligase complexes. Stabilizes adherens junctions by limiting CYTH1-dependent ARF6 activation. This chain is Innate immunity activator protein, found in Homo sapiens (Human).